The following is a 701-amino-acid chain: Elongation factor G (701 aa).

A tr-type G domain is found at 8-291; the sequence is SRYRNIGIVA…AVIDFLPAPT (284 aa). GTP is bound by residues 17 to 24, 89 to 93, and 143 to 146; these read AHVDAGKT, DTPGH, and NKMD.

Belongs to the TRAFAC class translation factor GTPase superfamily. Classic translation factor GTPase family. EF-G/EF-2 subfamily.

The protein localises to the cytoplasm. Catalyzes the GTP-dependent ribosomal translocation step during translation elongation. During this step, the ribosome changes from the pre-translocational (PRE) to the post-translocational (POST) state as the newly formed A-site-bound peptidyl-tRNA and P-site-bound deacylated tRNA move to the P and E sites, respectively. Catalyzes the coordinated movement of the two tRNA molecules, the mRNA and conformational changes in the ribosome. This Pseudomonas fluorescens (strain Pf0-1) protein is Elongation factor G.